Consider the following 736-residue polypeptide: Catalase-peroxidase (736 aa).

Residues 1-21 (MSNEQKCPFSGTHGARTTVGT) form a disordered region. The segment at residues 96–224 (WHSAGTYRTG…LAAVQMGLIY (129 aa)) is a cross-link (tryptophyl-tyrosyl-methioninium (Trp-Tyr) (with M-250)). His97 (proton acceptor) is an active-site residue. The tryptophyl-tyrosyl-methioninium (Tyr-Met) (with W-96) cross-link spans 224-250 (YVNPEGPDGNPDPVASGRDIRETFARM). Heme b is bound at residue His265.

It belongs to the peroxidase family. Peroxidase/catalase subfamily. Homodimer or homotetramer. The cofactor is heme b. Post-translationally, formation of the three residue Trp-Tyr-Met cross-link is important for the catalase, but not the peroxidase activity of the enzyme.

It catalyses the reaction H2O2 + AH2 = A + 2 H2O. It carries out the reaction 2 H2O2 = O2 + 2 H2O. Its function is as follows. Bifunctional enzyme with both catalase and broad-spectrum peroxidase activity. In Dechloromonas aromatica (strain RCB), this protein is Catalase-peroxidase.